The primary structure comprises 301 residues: Acetylglutamate kinase (301 aa).

Residues 72–73, Arg-94, and Asn-199 contribute to the substrate site; that span reads GG.

The protein belongs to the acetylglutamate kinase family. ArgB subfamily.

The protein resides in the cytoplasm. It carries out the reaction N-acetyl-L-glutamate + ATP = N-acetyl-L-glutamyl 5-phosphate + ADP. It functions in the pathway amino-acid biosynthesis; L-arginine biosynthesis; N(2)-acetyl-L-ornithine from L-glutamate: step 2/4. Catalyzes the ATP-dependent phosphorylation of N-acetyl-L-glutamate. The protein is Acetylglutamate kinase of Azorhizobium caulinodans (strain ATCC 43989 / DSM 5975 / JCM 20966 / LMG 6465 / NBRC 14845 / NCIMB 13405 / ORS 571).